A 223-amino-acid polypeptide reads, in one-letter code: Coiled-coil domain-containing protein 70 (223 aa).

Positions 129 to 153 (NALWERDRNLLQEDKALWEEEKALW) form a coiled coil. The interval 199–223 (EQRHQNGPYNANEEPQSTSFPRGRA) is disordered. The span at 203–223 (QNGPYNANEEPQSTSFPRGRA) shows a compositional bias: polar residues.

This chain is Coiled-coil domain-containing protein 70, found in Mus musculus (Mouse).